The primary structure comprises 213 residues: Uridine kinase (213 aa).

Residue 15 to 22 (GASASGKS) participates in ATP binding.

Belongs to the uridine kinase family.

The protein localises to the cytoplasm. The enzyme catalyses uridine + ATP = UMP + ADP + H(+). The catalysed reaction is cytidine + ATP = CMP + ADP + H(+). The protein operates within pyrimidine metabolism; CTP biosynthesis via salvage pathway; CTP from cytidine: step 1/3. It participates in pyrimidine metabolism; UMP biosynthesis via salvage pathway; UMP from uridine: step 1/1. This chain is Uridine kinase, found in Pectobacterium atrosepticum (strain SCRI 1043 / ATCC BAA-672) (Erwinia carotovora subsp. atroseptica).